Reading from the N-terminus, the 231-residue chain is Phosphatidylserine decarboxylase proenzyme (231 aa).

S188 serves as the catalytic Schiff-base intermediate with substrate; via pyruvic acid. Pyruvic acid (Ser); by autocatalysis is present on S188.

This sequence belongs to the phosphatidylserine decarboxylase family. PSD-A subfamily. As to quaternary structure, heterodimer of a large membrane-associated beta subunit and a small pyruvoyl-containing alpha subunit. Pyruvate is required as a cofactor. Is synthesized initially as an inactive proenzyme. Formation of the active enzyme involves a self-maturation process in which the active site pyruvoyl group is generated from an internal serine residue via an autocatalytic post-translational modification. Two non-identical subunits are generated from the proenzyme in this reaction, and the pyruvate is formed at the N-terminus of the alpha chain, which is derived from the carboxyl end of the proenzyme. The post-translation cleavage follows an unusual pathway, termed non-hydrolytic serinolysis, in which the side chain hydroxyl group of the serine supplies its oxygen atom to form the C-terminus of the beta chain, while the remainder of the serine residue undergoes an oxidative deamination to produce ammonia and the pyruvoyl prosthetic group on the alpha chain.

It localises to the cell membrane. The catalysed reaction is a 1,2-diacyl-sn-glycero-3-phospho-L-serine + H(+) = a 1,2-diacyl-sn-glycero-3-phosphoethanolamine + CO2. Its pathway is phospholipid metabolism; phosphatidylethanolamine biosynthesis; phosphatidylethanolamine from CDP-diacylglycerol: step 2/2. In terms of biological role, catalyzes the formation of phosphatidylethanolamine (PtdEtn) from phosphatidylserine (PtdSer). The protein is Phosphatidylserine decarboxylase proenzyme of Rickettsia rickettsii (strain Iowa).